The following is a 352-amino-acid chain: tRNA (guanine-N(1)-)-methyltransferase (352 aa).

S-adenosyl-L-methionine-binding positions include G109 and 129 to 134; that span reads IGDYVL.

The protein belongs to the RNA methyltransferase TrmD family. As to quaternary structure, homodimer.

It localises to the cytoplasm. It carries out the reaction guanosine(37) in tRNA + S-adenosyl-L-methionine = N(1)-methylguanosine(37) in tRNA + S-adenosyl-L-homocysteine + H(+). Specifically methylates guanosine-37 in various tRNAs. This is tRNA (guanine-N(1)-)-methyltransferase from Chlamydia trachomatis serovar L2 (strain ATCC VR-902B / DSM 19102 / 434/Bu).